The primary structure comprises 328 residues: D-cysteine desulfhydrase (328 aa).

An N6-(pyridoxal phosphate)lysine modification is found at Lys-51.

Belongs to the ACC deaminase/D-cysteine desulfhydrase family. In terms of assembly, homodimer. It depends on pyridoxal 5'-phosphate as a cofactor.

The catalysed reaction is D-cysteine + H2O = hydrogen sulfide + pyruvate + NH4(+) + H(+). Functionally, catalyzes the alpha,beta-elimination reaction of D-cysteine and of several D-cysteine derivatives. It could be a defense mechanism against D-cysteine. This chain is D-cysteine desulfhydrase, found in Salmonella schwarzengrund (strain CVM19633).